A 286-amino-acid chain; its full sequence is D-tagatose-1,6-bisphosphate aldolase subunit KbaY (286 aa).

Aspartate 82 acts as the Proton donor in catalysis. Residues histidine 83 and histidine 180 each coordinate Zn(2+). Residue glycine 181 coordinates dihydroxyacetone phosphate. Histidine 208 is a binding site for Zn(2+). Residues 209-211 (GAS) and 230-233 (NVAT) contribute to the dihydroxyacetone phosphate site.

It belongs to the class II fructose-bisphosphate aldolase family. TagBP aldolase KbaY subfamily. In terms of assembly, homotetramer. Forms a complex with KbaZ. Zn(2+) is required as a cofactor.

It carries out the reaction D-tagatofuranose 1,6-bisphosphate = D-glyceraldehyde 3-phosphate + dihydroxyacetone phosphate. It participates in carbohydrate metabolism; D-tagatose 6-phosphate degradation; D-glyceraldehyde 3-phosphate and glycerone phosphate from D-tagatose 6-phosphate: step 2/2. Its function is as follows. Catalytic subunit of the tagatose-1,6-bisphosphate aldolase KbaYZ, which catalyzes the reversible aldol condensation of dihydroxyacetone phosphate (DHAP or glycerone-phosphate) with glyceraldehyde 3-phosphate (G3P) to produce tagatose 1,6-bisphosphate (TBP). Requires KbaZ subunit for full activity and stability. This is D-tagatose-1,6-bisphosphate aldolase subunit KbaY from Escherichia coli O7:K1 (strain IAI39 / ExPEC).